Here is a 125-residue protein sequence, read N- to C-terminus: uncharacterized protein (125 aa).

Residues 100–120 (YFKVAFALAVLTPLAIWIFYI) form a helical membrane-spanning segment.

Its subcellular location is the membrane. This is an uncharacterized protein from Saccharomyces cerevisiae (strain ATCC 204508 / S288c) (Baker's yeast).